Reading from the N-terminus, the 136-residue chain is Large ribosomal subunit protein uL16 (136 aa).

It belongs to the universal ribosomal protein uL16 family. In terms of assembly, part of the 50S ribosomal subunit.

In terms of biological role, binds 23S rRNA and is also seen to make contacts with the A and possibly P site tRNAs. This Vibrio campbellii (strain ATCC BAA-1116) protein is Large ribosomal subunit protein uL16.